The following is a 152-amino-acid chain: SsrA-binding protein (152 aa).

A compositionally biased stretch (basic and acidic residues) spans 132–142 (REAIKKRDVSD). Positions 132–152 (REAIKKRDVSDQIRSSLRRSR) are disordered.

Belongs to the SmpB family.

The protein localises to the cytoplasm. Required for rescue of stalled ribosomes mediated by trans-translation. Binds to transfer-messenger RNA (tmRNA), required for stable association of tmRNA with ribosomes. tmRNA and SmpB together mimic tRNA shape, replacing the anticodon stem-loop with SmpB. tmRNA is encoded by the ssrA gene; the 2 termini fold to resemble tRNA(Ala) and it encodes a 'tag peptide', a short internal open reading frame. During trans-translation Ala-aminoacylated tmRNA acts like a tRNA, entering the A-site of stalled ribosomes, displacing the stalled mRNA. The ribosome then switches to translate the ORF on the tmRNA; the nascent peptide is terminated with the 'tag peptide' encoded by the tmRNA and targeted for degradation. The ribosome is freed to recommence translation, which seems to be the essential function of trans-translation. This chain is SsrA-binding protein, found in Bdellovibrio bacteriovorus (strain ATCC 15356 / DSM 50701 / NCIMB 9529 / HD100).